Here is a 975-residue protein sequence, read N- to C-terminus: Glycine dehydrogenase (decarboxylating) (975 aa).

The residue at position 723 (K723) is an N6-(pyridoxal phosphate)lysine.

The protein belongs to the GcvP family. In terms of assembly, the glycine cleavage system is composed of four proteins: P, T, L and H. Pyridoxal 5'-phosphate is required as a cofactor.

It catalyses the reaction N(6)-[(R)-lipoyl]-L-lysyl-[glycine-cleavage complex H protein] + glycine + H(+) = N(6)-[(R)-S(8)-aminomethyldihydrolipoyl]-L-lysyl-[glycine-cleavage complex H protein] + CO2. Functionally, the glycine cleavage system catalyzes the degradation of glycine. The P protein binds the alpha-amino group of glycine through its pyridoxal phosphate cofactor; CO(2) is released and the remaining methylamine moiety is then transferred to the lipoamide cofactor of the H protein. The sequence is that of Glycine dehydrogenase (decarboxylating) from Burkholderia vietnamiensis (strain G4 / LMG 22486) (Burkholderia cepacia (strain R1808)).